The sequence spans 430 residues: Tyrosine--tRNA ligase (430 aa).

Tyr-32 is an L-tyrosine binding site. Residues 37–46 (PTADSLHIGH) carry the 'HIGH' region motif. L-tyrosine is bound by residues Tyr-172 and Gln-176. Positions 232–236 (KFGKT) match the 'KMSKS' region motif. Lys-235 is a binding site for ATP. The region spanning 362–429 (VKAVDLFVDN…GKKNYFLLIA (68 aa)) is the S4 RNA-binding domain.

Belongs to the class-I aminoacyl-tRNA synthetase family. TyrS type 1 subfamily. In terms of assembly, homodimer.

The protein localises to the cytoplasm. The catalysed reaction is tRNA(Tyr) + L-tyrosine + ATP = L-tyrosyl-tRNA(Tyr) + AMP + diphosphate + H(+). Catalyzes the attachment of tyrosine to tRNA(Tyr) in a two-step reaction: tyrosine is first activated by ATP to form Tyr-AMP and then transferred to the acceptor end of tRNA(Tyr). This chain is Tyrosine--tRNA ligase, found in Bacteroides thetaiotaomicron (strain ATCC 29148 / DSM 2079 / JCM 5827 / CCUG 10774 / NCTC 10582 / VPI-5482 / E50).